A 201-amino-acid polypeptide reads, in one-letter code: Superoxide dismutase [Mn] (201 aa).

Residues His-27, His-81, Asp-163, and His-167 each coordinate Mn(2+).

It belongs to the iron/manganese superoxide dismutase family. As to quaternary structure, homodimer. Mn(2+) serves as cofactor.

It localises to the secreted. It carries out the reaction 2 superoxide + 2 H(+) = H2O2 + O2. Destroys superoxide anion radicals which are normally produced within the cells and which are toxic to biological systems. The polypeptide is Superoxide dismutase [Mn] (sodA) (Streptococcus pyogenes serotype M18 (strain MGAS8232)).